Reading from the N-terminus, the 346-residue chain is Protein farnesyltransferase/geranylgeranyltransferase type-1 subunit alpha (346 aa).

5 PFTA repeats span residues 59-93, 94-128, 130-164, 165-198, and 205-239; these read RSTRALQLTGEAIQLNPGNYTVWQFRRVVLEALGV, DLREELKFVDRIAGENTKNYQIWHHRRWLAEKLGA, AVTNELEFTKKIFSQDAKNYHAWSHRQWVLQALGG, WEDELAYCQQLLEDDIYNNSAWNQRYFVVTRSPL, and MRELEVNYTVQAIRASPENESPWRYLRGLYKNDTQ.

It belongs to the protein prenyltransferase subunit alpha family. Heterodimer of an alpha and a beta subunit. Mg(2+) serves as cofactor.

The catalysed reaction is L-cysteinyl-[protein] + (2E,6E)-farnesyl diphosphate = S-(2E,6E)-farnesyl-L-cysteinyl-[protein] + diphosphate. It carries out the reaction geranylgeranyl diphosphate + L-cysteinyl-[protein] = S-geranylgeranyl-L-cysteinyl-[protein] + diphosphate. Its function is as follows. Essential subunit of both the farnesyltransferase and the geranylgeranyltransferase complex. Contributes to the transfer of a farnesyl or geranylgeranyl moiety from farnesyl or geranylgeranyl diphosphate to a cysteine at the fourth position from the C-terminus of several proteins having the C-terminal sequence Cys-aliphatic-aliphatic-X. In Solanum lycopersicum (Tomato), this protein is Protein farnesyltransferase/geranylgeranyltransferase type-1 subunit alpha (FTA).